We begin with the raw amino-acid sequence, 379 residues long: Putative glutamate--cysteine ligase 2 (379 aa).

It belongs to the glutamate--cysteine ligase type 2 family. YbdK subfamily.

The catalysed reaction is L-cysteine + L-glutamate + ATP = gamma-L-glutamyl-L-cysteine + ADP + phosphate + H(+). Functionally, ATP-dependent carboxylate-amine ligase which exhibits weak glutamate--cysteine ligase activity. This is Putative glutamate--cysteine ligase 2 from Roseiflexus sp. (strain RS-1).